Consider the following 459-residue polypeptide: Paired box protein Pax-8 (459 aa).

Positions 9-135 (GHGGLNQLGG…SSINRIIRTK (127 aa)) form a DNA-binding region, paired. The PAI subdomain stretch occupies residues 12-68 (GLNQLGGAFVNGRPLPEVVRQRIVDLAHQGVRPCDISRQLRVSHGCVSKILGRYYET). An RED subdomain region spans residues 87–135 (KVVEKIGDYKRQNPTMFAWEIRDRLLAEGVCDNDTVPSVSSINRIIRTK). The span at 159–182 (LIPSSAVTPPESPQSDSLGSTYSI) shows a compositional bias: polar residues. Residues 159–223 (LIPSSAVTPP…QSSSSGPRKH (65 aa)) form a disordered region. Ser-305 is subject to Phosphoserine.

As to quaternary structure, interacts with WWTR1.

The protein resides in the nucleus. Thought to encode a transcription factor. It may have a role in kidney cell differentiation. May play a regulatory role in mammalian development. In Canis lupus familiaris (Dog), this protein is Paired box protein Pax-8 (PAX8).